Here is a 370-residue protein sequence, read N- to C-terminus: Putative FBD-associated F-box protein At1g50980 (370 aa).

An F-box domain is found at 31–77 (IRTISEFPDKVLLKILSLLPSKDVVATGVLSKRWRSLWKDVKTFRTS). The FBD domain occupies 292-343 (LMGNQPDLIPKSLSSHLEILEWRQYNDTAQEREAAKYILANASGLRKATFYT).

In Arabidopsis thaliana (Mouse-ear cress), this protein is Putative FBD-associated F-box protein At1g50980.